The following is a 344-amino-acid chain: MDSTKTNNKWAAAGILNSVGKDFVAGSVGGMSSIMAGHPFDTIKVMLQDASGNLPKFKNGFQALKYIMKVDGIKGIYRGLSVPLFSVSFTNSVFFATNNFCQSYFHPPCKDENGEDILIPYHKAAAAGAIAGGVISLLITPRDLVKSKLQVQCRPFGSTNVSLQYKGPIDVIRQTIKRDGIKGMFKGIRSTFCRDIPGDAVYFVVYEFMKRKLLALSKNNNNNNNNNDNNDNSSPKAGVPAWVAIGAGGCAGMSFWMSIYPMDVVKTRIQTQPDHLPPQYTSVLQTITKIYREEGISVFFRGFSATILRAFPTSAVNFLMYETTRNLLNSKDPFYNNNDHYNAE.

The Mitochondrial intermembrane segment spans residues 1–22; sequence MDSTKTNNKWAAAGILNSVGKD. Solcar repeat units follow at residues 17–104, 119–212, and 239–327; these read NSVG…CQSY, IPYH…MKRK, and VPAW…TRNL. A helical membrane pass occupies residues 23 to 43; sequence FVAGSVGGMSSIMAGHPFDTI. The Mitochondrial matrix portion of the chain corresponds to 44–75; sequence KVMLQDASGNLPKFKNGFQALKYIMKVDGIKG. The chain crosses the membrane as a helical span at residues 76–96; sequence IYRGLSVPLFSVSFTNSVFFA. Over 97 to 116 the chain is Mitochondrial intermembrane; that stretch reads TNNFCQSYFHPPCKDENGED. The helical transmembrane segment at 117–137 threads the bilayer; sequence ILIPYHKAAAAGAIAGGVISL. Topologically, residues 138 to 186 are mitochondrial matrix; that stretch reads LITPRDLVKSKLQVQCRPFGSTNVSLQYKGPIDVIRQTIKRDGIKGMFK. A helical membrane pass occupies residues 187–207; it reads GIRSTFCRDIPGDAVYFVVYE. Topologically, residues 208–238 are mitochondrial intermembrane; it reads FMKRKLLALSKNNNNNNNNNDNNDNSSPKAG. The helical transmembrane segment at 239–259 threads the bilayer; it reads VPAWVAIGAGGCAGMSFWMSI. Over 260 to 301 the chain is Mitochondrial matrix; the sequence is YPMDVVKTRIQTQPDHLPPQYTSVLQTITKIYREEGISVFFR. The chain crosses the membrane as a helical span at residues 302–321; the sequence is GFSATILRAFPTSAVNFLMY. The Mitochondrial intermembrane segment spans residues 322–344; sequence ETTRNLLNSKDPFYNNNDHYNAE.

It belongs to the mitochondrial carrier (TC 2.A.29) family.

Its subcellular location is the mitochondrion inner membrane. Its function is as follows. Calcium-dependent mitochondrial solute carrier. Mitochondrial solute carriers shuttle metabolites, nucleotides, and cofactors through the mitochondrial inner membrane. The protein is Mitochondrial substrate carrier family protein D (mcfD) of Dictyostelium discoideum (Social amoeba).